The chain runs to 220 residues: Miraculin (220 aa).

The signal sequence occupies residues 1–29; the sequence is MKELTMLSLSFFFVSALLAAAANPLLSAA. Asn71 carries an N-linked (GlcNAc...) asparagine glycan. Intrachain disulfides connect Cys76/Cys121, Cys177/Cys188, and Cys181/Cys184. A glycan (N-linked (GlcNAc...) asparagine) is linked at Asn215.

It belongs to the protease inhibitor I3 (leguminous Kunitz-type inhibitor) family. In terms of assembly, homotetramer; dimer of homodimer. In terms of processing, glycosylated; contains as much as 13,9% of sugars (glucosamine, mannose, galactose, xylose, and fucose). As to expression, expressed in fruit pulp after pollination. Not expressed in seeds, stems or leaves.

In terms of biological role, miraculin has the property of modifying a sour taste into a sweet taste. This alteration of taste perception persists for many minutes. This Synsepalum dulcificum (Miracle fruit) protein is Miraculin.